Reading from the N-terminus, the 643-residue chain is Threonine--tRNA ligase (643 aa).

The TGS domain occupies 1–61; sequence MPIITLPDGS…EQDATLEIIT (61 aa). Residues 243–534 form a catalytic region; that stretch reads DHRKIGKALD…ITEEYAGFFP (292 aa). Residues cysteine 334, histidine 385, and histidine 511 each coordinate Zn(2+).

The protein belongs to the class-II aminoacyl-tRNA synthetase family. As to quaternary structure, homodimer. Zn(2+) serves as cofactor.

Its subcellular location is the cytoplasm. It carries out the reaction tRNA(Thr) + L-threonine + ATP = L-threonyl-tRNA(Thr) + AMP + diphosphate + H(+). Catalyzes the attachment of threonine to tRNA(Thr) in a two-step reaction: L-threonine is first activated by ATP to form Thr-AMP and then transferred to the acceptor end of tRNA(Thr). Also edits incorrectly charged L-seryl-tRNA(Thr). This is Threonine--tRNA ligase from Haemophilus influenzae (strain PittGG).